Reading from the N-terminus, the 277-residue chain is MNKSFIKNKLKQESFVPSKKMGQNFLLSNNIKNKIVDVANINKDDLILEIGPGWGAITEILVQKTNILIAIELDKRLYAHLKTYIKTSNFHIINNDVLCVDLDNLILDYNNTQKIQKIKVVANLPYAISSKIVLKIIQSKLINDAYIMVQKEMAERIGAKVNTRGYNAFTVLVQLFCKTKILFEVNAKEFHPQPKVQSAVIHLENLHNSVNFNIEELGKFLRICFLNKRKKLKNNLSNIYDIKIINQMFIDYNLDMNLRAENIEPKMFLKLFNYLNR.

The S-adenosyl-L-methionine site is built by Asn-24, Leu-26, Gly-51, Glu-72, Asp-96, and Asn-123.

Belongs to the class I-like SAM-binding methyltransferase superfamily. rRNA adenine N(6)-methyltransferase family. RsmA subfamily.

The protein localises to the cytoplasm. It catalyses the reaction adenosine(1518)/adenosine(1519) in 16S rRNA + 4 S-adenosyl-L-methionine = N(6)-dimethyladenosine(1518)/N(6)-dimethyladenosine(1519) in 16S rRNA + 4 S-adenosyl-L-homocysteine + 4 H(+). Functionally, specifically dimethylates two adjacent adenosines (A1518 and A1519) in the loop of a conserved hairpin near the 3'-end of 16S rRNA in the 30S particle. May play a critical role in biogenesis of 30S subunits. The sequence is that of Ribosomal RNA small subunit methyltransferase A from Ureaplasma parvum serovar 3 (strain ATCC 27815 / 27 / NCTC 11736).